Reading from the N-terminus, the 281-residue chain is Proteasome subunit beta 2 (281 aa).

A propeptide spans 1–53 (MEANTRSTGRLPAAFLTPGSSSFMDFLSEHQPEILPGNRQLPPTQGVIEAPHG) (removed in mature form; by autocatalysis). Thr-54 serves as the catalytic Nucleophile.

The protein belongs to the peptidase T1B family. In terms of assembly, the 20S proteasome core is composed of 14 alpha and 14 beta subunits that assemble into four stacked heptameric rings, resulting in a barrel-shaped structure. The two inner rings, each composed of seven catalytic beta subunits, are sandwiched by two outer rings, each composed of seven alpha subunits. The catalytic chamber with the active sites is on the inside of the barrel. Has a gated structure, the ends of the cylinder being occluded by the N-termini of the alpha-subunits. Is capped by the proteasome-associated ATPase, ARC.

It localises to the cytoplasm. It carries out the reaction Cleavage of peptide bonds with very broad specificity.. The protein operates within protein degradation; proteasomal Pup-dependent pathway. With respect to regulation, the formation of the proteasomal ATPase ARC-20S proteasome complex, likely via the docking of the C-termini of ARC into the intersubunit pockets in the alpha-rings, may trigger opening of the gate for substrate entry. Interconversion between the open-gate and close-gate conformations leads to a dynamic regulation of the 20S proteasome proteolysis activity. Functionally, component of the proteasome core, a large protease complex with broad specificity involved in protein degradation. The chain is Proteasome subunit beta 2 from Streptomyces avermitilis (strain ATCC 31267 / DSM 46492 / JCM 5070 / NBRC 14893 / NCIMB 12804 / NRRL 8165 / MA-4680).